A 137-amino-acid chain; its full sequence is Fluoride-specific ion channel FluC 1 (137 aa).

4 helical membrane passes run 3-23 (PLVV…RLVL), 42-62 (INVT…GHGL), 69-89 (ILGT…YEAV), and 107-127 (MMFL…LAVA). Na(+) is bound by residues glycine 76 and threonine 79.

It belongs to the fluoride channel Fluc/FEX (TC 1.A.43) family.

Its subcellular location is the cell membrane. It catalyses the reaction fluoride(in) = fluoride(out). Na(+) is not transported, but it plays an essential structural role and its presence is essential for fluoride channel function. Functionally, fluoride-specific ion channel. Important for reducing fluoride concentration in the cell, thus reducing its toxicity. In Leifsonia xyli subsp. xyli (strain CTCB07), this protein is Fluoride-specific ion channel FluC 1.